Consider the following 98-residue polypeptide: Large ribosomal subunit protein bL25 (98 aa).

Residues 1–22 (MANFVLNATARNEDKQGKGASR) are disordered.

This sequence belongs to the bacterial ribosomal protein bL25 family. Part of the 50S ribosomal subunit; part of the 5S rRNA/L5/L18/L25 subcomplex. Contacts the 5S rRNA. Binds to the 5S rRNA independently of L5 and L18.

This is one of the proteins that binds to the 5S RNA in the ribosome where it forms part of the central protuberance. The polypeptide is Large ribosomal subunit protein bL25 (Acinetobacter baylyi (strain ATCC 33305 / BD413 / ADP1)).